Consider the following 368-residue polypeptide: C6 finger domain transcription factor tcpZ (368 aa).

Residues cysteine 30–cysteine 56 constitute a DNA-binding region (zn(2)-C6 fungal-type). The segment at phenylalanine 84–alanine 109 is disordered.

It localises to the nucleus. Its function is as follows. Transcription factor that specifically regulates the thioclapurine biosynthesis gene cluster. The protein is C6 finger domain transcription factor tcpZ of Claviceps purpurea (strain 20.1) (Ergot fungus).